The sequence spans 438 residues: UDP-N-acetylmuramoylalanine--D-glutamate ligase (438 aa).

112–118 provides a ligand contact to ATP; that stretch reads GSNGKST.

Belongs to the MurCDEF family.

It is found in the cytoplasm. The enzyme catalyses UDP-N-acetyl-alpha-D-muramoyl-L-alanine + D-glutamate + ATP = UDP-N-acetyl-alpha-D-muramoyl-L-alanyl-D-glutamate + ADP + phosphate + H(+). The protein operates within cell wall biogenesis; peptidoglycan biosynthesis. In terms of biological role, cell wall formation. Catalyzes the addition of glutamate to the nucleotide precursor UDP-N-acetylmuramoyl-L-alanine (UMA). The sequence is that of UDP-N-acetylmuramoylalanine--D-glutamate ligase from Shigella sonnei (strain Ss046).